Here is a 293-residue protein sequence, read N- to C-terminus: Lymphocyte antigen 6 complex locus protein G6f (293 aa).

Residues 1 to 19 (MAMVVFLLLYLCGHPQAAA) form the signal peptide. In terms of domain architecture, Ig-like V-type spans 20 to 124 (DNIQTLYVPS…HKYQNWRVYD (105 aa)). At 20–237 (DNIQTLYVPS…APLPSWDVSW (218 aa)) the chain is on the extracellular side. An intrachain disulfide couples Cys-37 to Cys-108. An N-linked (GlcNAc...) asparagine glycan is attached at Asn-90. The chain crosses the membrane as a helical span at residues 238 to 258 (ILMLLFAAGQGVTIIALSIVI). At 259 to 293 (WRHQRAQGTQDREPSIPHFKPEVQVYENIHLARLR) the chain is on the cytoplasmic side. Residue Tyr-284 is modified to Phosphotyrosine.

Homodimer; disulfide-linked. Interacts with GRB2 and GRB7 in a phosphorylation-dependent manner. In terms of processing, N-glycosylated.

It is found in the cell membrane. Its function is as follows. May play a role in the downstream signal transduction pathways involving GRB2 and GRB7. The polypeptide is Lymphocyte antigen 6 complex locus protein G6f (Ly6g6f) (Rattus norvegicus (Rat)).